The following is a 276-amino-acid chain: MKIRRYLVPNLIAWSIGIAWLIPFMGVLMASVRPYEEIVSGWWHLHPFTITLKNYINALNHPMFPIGEGLKNSLIVAIPSTIVPVIVASLAAYAFARYSFPIKHYLFAFIVLLMALPQQMTVVPLYFLLRNAHLLNTFRGLIIVHSAWGLAWIIFFMRNYFSMLPTDVEEAAKIDGATDFQIFYKIVLPMALPGLISASILQFTWVWSDFFLALVFLQNPEKYVATQRLPLLRGQYFVDWGLLTAASIMVMLVPLLVYALFQKYYISGMIGWSVEK.

6 helical membrane-spanning segments follow: residues 12–32, 75–95, 109–129, 137–157, 186–206, and 241–261; these read IAWSIGIAWLIPFMGVLMASV, IVAIPSTIVPVIVASLAAYAF, FIVLLMALPQQMTVVPLYFLL, TFRGLIIVHSAWGLAWIIFFM, IVLPMALPGLISASILQFTWV, and GLLTAASIMVMLVPLLVYALF. The region spanning 70 to 261 is the ABC transmembrane type-1 domain; the sequence is LKNSLIVAIP…LVPLLVYALF (192 aa).

This sequence belongs to the binding-protein-dependent transport system permease family. MalFG subfamily.

It localises to the cell membrane. Probably part of a binding-protein-dependent transport system PH1036/38/39. Probably responsible for the translocation of the substrate across the membrane. The protein is Probable ABC transporter permease protein PH1036 of Pyrococcus horikoshii (strain ATCC 700860 / DSM 12428 / JCM 9974 / NBRC 100139 / OT-3).